We begin with the raw amino-acid sequence, 85 residues long: Cell division protein ZapA (85 aa).

Positions 60 to 85 form a coiled coil; that stretch reads AVNVVHDYLKLKEELERLKGQIKEKD.

The protein belongs to the ZapA family. Type 2 subfamily. As to quaternary structure, homodimer. Interacts with FtsZ.

It is found in the cytoplasm. Its function is as follows. Activator of cell division through the inhibition of FtsZ GTPase activity, therefore promoting FtsZ assembly into bundles of protofilaments necessary for the formation of the division Z ring. It is recruited early at mid-cell but it is not essential for cell division. This chain is Cell division protein ZapA, found in Bacillus licheniformis (strain ATCC 14580 / DSM 13 / JCM 2505 / CCUG 7422 / NBRC 12200 / NCIMB 9375 / NCTC 10341 / NRRL NRS-1264 / Gibson 46).